A 342-amino-acid chain; its full sequence is 3-isopropylmalate dehydrogenase (342 aa).

4 residues coordinate substrate: Arg-92, Arg-102, Arg-126, and Asp-216. Mg(2+)-binding residues include Asp-216, Asp-240, and Asp-244. Residue 276 to 288 (GSAPDIAGKGIAD) coordinates NAD(+).

It belongs to the isocitrate and isopropylmalate dehydrogenases family. LeuB type 2 subfamily. Homodimer. The cofactor is Mg(2+). Mn(2+) serves as cofactor.

The protein resides in the cytoplasm. It catalyses the reaction (2R,3S)-3-isopropylmalate + NAD(+) = 4-methyl-2-oxopentanoate + CO2 + NADH. The protein operates within amino-acid biosynthesis; L-leucine biosynthesis; L-leucine from 3-methyl-2-oxobutanoate: step 3/4. In terms of biological role, catalyzes the oxidation of 3-carboxy-2-hydroxy-4-methylpentanoate (3-isopropylmalate) to 3-carboxy-4-methyl-2-oxopentanoate. The product decarboxylates to 4-methyl-2 oxopentanoate. The sequence is that of 3-isopropylmalate dehydrogenase from Corynebacterium kroppenstedtii (strain DSM 44385 / JCM 11950 / CIP 105744 / CCUG 35717).